The primary structure comprises 95 residues: MKINKDEVEKVALLARLELTGEEAEMFTGQMDAILAYVDKLNELNTDGIVPTAHAVPMENAFRADEVRDSIGIDNALANAPKRAESFFRVPKVIE.

It belongs to the GatC family. Heterotrimer of A, B and C subunits.

The enzyme catalyses L-glutamyl-tRNA(Gln) + L-glutamine + ATP + H2O = L-glutaminyl-tRNA(Gln) + L-glutamate + ADP + phosphate + H(+). It carries out the reaction L-aspartyl-tRNA(Asn) + L-glutamine + ATP + H2O = L-asparaginyl-tRNA(Asn) + L-glutamate + ADP + phosphate + 2 H(+). In terms of biological role, allows the formation of correctly charged Asn-tRNA(Asn) or Gln-tRNA(Gln) through the transamidation of misacylated Asp-tRNA(Asn) or Glu-tRNA(Gln) in organisms which lack either or both of asparaginyl-tRNA or glutaminyl-tRNA synthetases. The reaction takes place in the presence of glutamine and ATP through an activated phospho-Asp-tRNA(Asn) or phospho-Glu-tRNA(Gln). This is Aspartyl/glutamyl-tRNA(Asn/Gln) amidotransferase subunit C from Geotalea daltonii (strain DSM 22248 / JCM 15807 / FRC-32) (Geobacter daltonii).